Consider the following 158-residue polypeptide: NAD(P)H-quinone oxidoreductase subunit N (158 aa).

Belongs to the complex I NdhN subunit family. In terms of assembly, NDH-1 can be composed of about 15 different subunits; different subcomplexes with different compositions have been identified which probably have different functions.

It localises to the cellular thylakoid membrane. It carries out the reaction a plastoquinone + NADH + (n+1) H(+)(in) = a plastoquinol + NAD(+) + n H(+)(out). It catalyses the reaction a plastoquinone + NADPH + (n+1) H(+)(in) = a plastoquinol + NADP(+) + n H(+)(out). Its function is as follows. NDH-1 shuttles electrons from an unknown electron donor, via FMN and iron-sulfur (Fe-S) centers, to quinones in the respiratory and/or the photosynthetic chain. The immediate electron acceptor for the enzyme in this species is believed to be plastoquinone. Couples the redox reaction to proton translocation, and thus conserves the redox energy in a proton gradient. Cyanobacterial NDH-1 also plays a role in inorganic carbon-concentration. In Gloeothece citriformis (strain PCC 7424) (Cyanothece sp. (strain PCC 7424)), this protein is NAD(P)H-quinone oxidoreductase subunit N.